The primary structure comprises 1182 residues: Intraflagellar transport protein 122 homolog (1182 aa).

WD repeat units follow at residues 10–50 (KAEQ…QPLK), 51–91 (GHKD…LKYT), 93–129 (NDSIQCVSYNPVTHQLASCSSSDFGLWSPEQKSVSKH), 131–169 (SSSKITCCSWTNDGQYLALGMANGIISIRNKNGEEKVKI), 174–217 (GSLS…IGKD), 219–258 (PLNFDPCCISYFTKGEYILVGGSDKQVSLFTKDGVRLGTV), 260–300 (EQNS…HGLY), and 453–492 (KQATAVRCLDMSASRNKLAVVDENDTCLVYDIHTKELLFQ).

As to quaternary structure, component of the IFT complex A (IFT-A) complex. IFT-A complex is divided into a core subcomplex composed of IFT122:IFT140:WDR19 which is associated with TULP3 and a peripheral subcomplex composed of IFT43:WDR35:TTC21B. Interacts with IFT43:WDR35; the interaction connects the 2 IFT-A subcomplexes. Interacts with IFTAP; the interaction associates IFTAP with IFT-A complex.

Its subcellular location is the cell projection. It is found in the cilium. The protein resides in the cytoplasm. It localises to the cytoskeleton. The protein localises to the cilium basal body. Its function is as follows. As a component of the IFT complex A (IFT-A), a complex required for retrograde ciliary transport and entry into cilia of G protein-coupled receptors (GPCRs), it is required in ciliogenesis and ciliary protein trafficking. Involved in cilia formation during neuronal patterning. Acts as a negative regulator of Shh signaling. Required to recruit TULP3 to primary cilia. This is Intraflagellar transport protein 122 homolog from Mus musculus (Mouse).